The primary structure comprises 68 residues: Large ribosomal subunit protein bL31 (68 aa).

Positions 16, 18, 37, and 40 each coordinate Zn(2+).

Belongs to the bacterial ribosomal protein bL31 family. Type A subfamily. In terms of assembly, part of the 50S ribosomal subunit. Zn(2+) serves as cofactor.

Its function is as follows. Binds the 23S rRNA. The chain is Large ribosomal subunit protein bL31 from Acidithiobacillus ferrooxidans (strain ATCC 23270 / DSM 14882 / CIP 104768 / NCIMB 8455) (Ferrobacillus ferrooxidans (strain ATCC 23270)).